Consider the following 246-residue polypeptide: uncharacterized protein (246 aa).

This is an uncharacterized protein from Methanocaldococcus jannaschii (strain ATCC 43067 / DSM 2661 / JAL-1 / JCM 10045 / NBRC 100440) (Methanococcus jannaschii).